The primary structure comprises 65 residues: MKFIKLFTFLVYLFVTLTNVFAFPDGMMCLNLDGSVGGYGCVFRRVESPTTTTKNYCDYYYCEDD.

The signal sequence occupies residues 1–22 (MKFIKLFTFLVYLFVTLTNVFA).

This is an uncharacterized protein from Invertebrate iridescent virus 6 (IIV-6).